The primary structure comprises 312 residues: Aspartate carbamoyltransferase catalytic subunit (312 aa).

Carbamoyl phosphate contacts are provided by Arg58 and Thr59. Lys86 contacts L-aspartate. Arg108, His136, and Gln139 together coordinate carbamoyl phosphate. Positions 169 and 223 each coordinate L-aspartate. Carbamoyl phosphate contacts are provided by Gly264 and Pro265.

The protein belongs to the aspartate/ornithine carbamoyltransferase superfamily. ATCase family. Heterododecamer (2C3:3R2) of six catalytic PyrB chains organized as two trimers (C3), and six regulatory PyrI chains organized as three dimers (R2).

It catalyses the reaction carbamoyl phosphate + L-aspartate = N-carbamoyl-L-aspartate + phosphate + H(+). It participates in pyrimidine metabolism; UMP biosynthesis via de novo pathway; (S)-dihydroorotate from bicarbonate: step 2/3. Functionally, catalyzes the condensation of carbamoyl phosphate and aspartate to form carbamoyl aspartate and inorganic phosphate, the committed step in the de novo pyrimidine nucleotide biosynthesis pathway. The sequence is that of Aspartate carbamoyltransferase catalytic subunit from Desulforapulum autotrophicum (strain ATCC 43914 / DSM 3382 / VKM B-1955 / HRM2) (Desulfobacterium autotrophicum).